A 276-amino-acid polypeptide reads, in one-letter code: Mitochondrial outer membrane protein porin 2 (276 aa).

Phosphoserine is present on S76. At T236 the chain carries Phosphothreonine.

Belongs to the eukaryotic mitochondrial porin (TC 1.B.8.1) family. In terms of tissue distribution, expressed in root tips, steles, leaves, sepals, petals, stamen and pistils.

Its subcellular location is the mitochondrion outer membrane. Functionally, forms a channel through the mitochondrial outer membrane that allows diffusion of small hydrophilic molecules. The channel adopts an open conformation at low or zero membrane potential and a closed conformation at potentials above 30-40 mV. The open state has a weak anion selectivity whereas the closed state is cation-selective. Involved in plant growth and development at the vegetative and reproductive stages. Is important for leaf and pollen development and mitochondrial membrane potential steady state. May be involved in ABA-mediated early seedling development and disease resistance. The chain is Mitochondrial outer membrane protein porin 2 (VDAC2) from Arabidopsis thaliana (Mouse-ear cress).